We begin with the raw amino-acid sequence, 243 residues long: NAD-dependent protein deacetylase (243 aa).

A Deacetylase sirtuin-type domain is found at 1–243 (MKHDLETLKH…VSVVKSLMTE (243 aa)). The NAD(+) site is built by A24, F35, R36, Q105, I107, D108, and H123. F35 is a nicotinamide binding site. I107 and D108 together coordinate nicotinamide. The Proton acceptor role is filled by H123. Zn(2+) contacts are provided by C131, C134, C151, and C154. Positions 192, 193, 215, and 232 each coordinate NAD(+).

It belongs to the sirtuin family. Class U subfamily. The cofactor is Zn(2+).

It localises to the cytoplasm. It catalyses the reaction N(6)-acetyl-L-lysyl-[protein] + NAD(+) + H2O = 2''-O-acetyl-ADP-D-ribose + nicotinamide + L-lysyl-[protein]. Its function is as follows. NAD-dependent protein deacetylase which modulates the activities of several enzymes which are inactive in their acetylated form. The sequence is that of NAD-dependent protein deacetylase from Staphylococcus aureus (strain COL).